A 175-amino-acid chain; its full sequence is Ribosome maturation factor RimM (175 aa).

Residues 99–172 (SIEFTWEHFI…KLTMIIPDGL (74 aa)) enclose the PRC barrel domain.

Belongs to the RimM family. In terms of assembly, binds ribosomal protein uS19.

The protein localises to the cytoplasm. Functionally, an accessory protein needed during the final step in the assembly of 30S ribosomal subunit, possibly for assembly of the head region. Essential for efficient processing of 16S rRNA. May be needed both before and after RbfA during the maturation of 16S rRNA. It has affinity for free ribosomal 30S subunits but not for 70S ribosomes. This chain is Ribosome maturation factor RimM, found in Porphyromonas gingivalis (strain ATCC BAA-308 / W83).